The chain runs to 266 residues: Undecaprenyl-diphosphatase (266 aa).

The next 8 membrane-spanning stretches (helical) occupy residues 1-21 (MDTF…FLPI), 39-59 (QGLS…VIYF), 87-107 (WWII…KDFI), 111-131 (LRSA…LWWA), 149-169 (ALLI…RSGA), 183-203 (AAAR…AILV), 218-238 (ALTL…HYFL), and 246-266 (MTPF…FIFL).

It belongs to the UppP family.

Its subcellular location is the cell inner membrane. It catalyses the reaction di-trans,octa-cis-undecaprenyl diphosphate + H2O = di-trans,octa-cis-undecaprenyl phosphate + phosphate + H(+). Functionally, catalyzes the dephosphorylation of undecaprenyl diphosphate (UPP). Confers resistance to bacitracin. The protein is Undecaprenyl-diphosphatase of Shewanella sp. (strain MR-4).